Here is an 886-residue protein sequence, read N- to C-terminus: Linoleate 9S-lipoxygenase 5 (886 aa).

The region spanning 35-180 is the PLAT domain; sequence IEGEVVVMKK…RYRSDRVFFS (146 aa). Positions 183–886 constitute a Lipoxygenase domain; sequence AYLPSETPEL…GKGIPNSVSI (704 aa). Residues 234 to 266 are disordered; that stretch reads GPDSVRPVLGGSPELPYPRRGKTGRKSTKSDPK. H542, H547, H733, N737, and I886 together coordinate Fe cation.

It belongs to the lipoxygenase family. Fe cation is required as a cofactor. As to expression, expressed in roots.

The enzyme catalyses (9Z,12Z)-octadecadienoate + O2 = (9S)-hydroperoxy-(10E,12Z)-octadecadienoate. It catalyses the reaction (9Z,12Z,15Z)-octadecatrienoate + O2 = (9S)-hydroperoxy-(10E,12Z,15Z)-octadecatrienoate. The protein operates within lipid metabolism; oxylipin biosynthesis. Its function is as follows. 9S-lipoxygenase that can use linoleic acid or linolenic acid as substrates. Plant lipoxygenases may be involved in a number of diverse aspects of plant physiology including growth and development, pest resistance, and senescence or responses to wounding. Catalyzes the hydroperoxidation of lipids containing a cis,cis-1,4-pentadiene structure. Function as regulators of root development by controlling the emergence of lateral roots. 9S-lypoxygenase-derived oxylipins may play an antagonistic role to ethylene signaling in the control of responses involving oxidative stress, lipid peroxidation and plant defense. LOX5-derived oxylipins may facilitate performance of green peach aphid (Myzus persicae) on foliage. 9S-lypoxygenase-derived oxylipins are engaged during infection to control the balance between salicylic acid (SA) and jasmonate (JA) signaling to facilitate infection by the fungal pathogen Fusarium graminearum. 9S-lypoxygenase-derived oxylipins activate brassinosteroid signaling to promote cell wall-based defense and limit pathogen infection. Does not seem to contribute to the oxidation of free fatty acids during seed aging. The sequence is that of Linoleate 9S-lipoxygenase 5 from Arabidopsis thaliana (Mouse-ear cress).